A 366-amino-acid chain; its full sequence is Glutathione S-transferase omega-like 3 (366 aa).

Cys-46 is a catalytic residue. Residues 197–349 (PRSLEAQITE…LGYTRSQPRV (153 aa)) form the GST C-terminal domain.

This sequence belongs to the GST superfamily. Omega family.

It localises to the cytoplasm. The catalysed reaction is RX + glutathione = an S-substituted glutathione + a halide anion + H(+). Functionally, active as '1-Cys' thiol transferase against beta-hydroxyethyl disulfide (HED), as dehydroascorbate reductase and as dimethylarsinic acid reductase, while not active against the standard GST substrate 1-chloro-2,4-dinitrobenzene (CDNB). This is Glutathione S-transferase omega-like 3 (GTO3) from Saccharomyces cerevisiae (strain ATCC 204508 / S288c) (Baker's yeast).